Here is a 114-residue protein sequence, read N- to C-terminus: Nucleoid-associated protein Clos_2855 (114 aa).

The protein belongs to the YbaB/EbfC family. As to quaternary structure, homodimer.

The protein localises to the cytoplasm. The protein resides in the nucleoid. Its function is as follows. Binds to DNA and alters its conformation. May be involved in regulation of gene expression, nucleoid organization and DNA protection. The sequence is that of Nucleoid-associated protein Clos_2855 from Alkaliphilus oremlandii (strain OhILAs) (Clostridium oremlandii (strain OhILAs)).